Here is a 149-residue protein sequence, read N- to C-terminus: UPF0336 protein CMM_2793 (149 aa).

The MaoC-like domain maps to 16-117 (APYLVGREKV…TVTKVATLGG (102 aa)).

The protein belongs to the UPF0336 family.

In Clavibacter michiganensis subsp. michiganensis (strain NCPPB 382), this protein is UPF0336 protein CMM_2793.